A 372-amino-acid chain; its full sequence is GDSL esterase/lipase At5g45910 (372 aa).

The signal sequence occupies residues methionine 1–serine 19. Catalysis depends on serine 37, which acts as the Nucleophile. N-linked (GlcNAc...) asparagine glycosylation is found at asparagine 66, asparagine 101, and asparagine 137. Catalysis depends on residues aspartate 345 and histidine 348.

This sequence belongs to the 'GDSL' lipolytic enzyme family.

The protein localises to the secreted. In Arabidopsis thaliana (Mouse-ear cress), this protein is GDSL esterase/lipase At5g45910.